The following is a 327-amino-acid chain: Beta-1,4-galactosyltransferase 7 (327 aa).

Over 1-30 the chain is Cytoplasmic; that stretch reads MFPSRRKAAQLPWEDGRSGLLSGGLPRKCS. A helical; Signal-anchor for type II membrane protein transmembrane segment spans residues 31–51; it reads VFHLFVACLSLGFFSLLWLQL. The Lumenal segment spans residues 52–327; that stretch reads SCSGDVARAV…KTATPWCTFS (276 aa). The disordered stretch occupies residues 63-87; that stretch reads GQGQETSGPPRACPPEPPPEHWEED. UDP-alpha-D-galactose is bound by residues 100–104 and 139–141; these read PFRER and FNR. A glycan (N-linked (GlcNAc...) asparagine) is linked at asparagine 154. UDP-alpha-D-galactose contacts are provided by residues 164–165, tyrosine 194, and tryptophan 224; that span reads VD. Aspartate 165 serves as a coordination point for Mn(2+). 226 to 229 contacts N-acetyl-D-glucosamine; that stretch reads REDD. Histidine 257 serves as a coordination point for Mn(2+). Residues 257–259 and arginine 266 each bind UDP-alpha-D-galactose; that span reads HLH. Residues cysteine 316 and cysteine 324 are joined by a disulfide bond.

The protein belongs to the glycosyltransferase 7 family. It depends on Mn(2+) as a cofactor. In terms of tissue distribution, high expression in heart, pancreas and liver, medium in placenta and kidney, low in brain, skeletal muscle and lung.

Its subcellular location is the golgi apparatus. The protein resides in the golgi stack membrane. The enzyme catalyses 3-O-(beta-D-xylosyl)-L-seryl-[protein] + UDP-alpha-D-galactose = 3-O-(beta-D-galactosyl-(1-&gt;4)-beta-D-xylosyl)-L-seryl-[protein] + UDP + H(+). It participates in protein modification; protein glycosylation. Required for the biosynthesis of the tetrasaccharide linkage region of proteoglycans, especially for small proteoglycans in skin fibroblasts. This chain is Beta-1,4-galactosyltransferase 7 (B4GALT7), found in Homo sapiens (Human).